The chain runs to 108 residues: Iron-sulfur cluster assembly protein CyaY (108 aa).

Belongs to the frataxin family.

Functionally, involved in iron-sulfur (Fe-S) cluster assembly. May act as a regulator of Fe-S biogenesis. The polypeptide is Iron-sulfur cluster assembly protein CyaY (Burkholderia vietnamiensis (strain G4 / LMG 22486) (Burkholderia cepacia (strain R1808))).